The sequence spans 500 residues: ATP synthase subunit alpha (500 aa).

169–176 (GDRQTGKT) contacts ATP.

The protein belongs to the ATPase alpha/beta chains family. As to quaternary structure, F-type ATPases have 2 components, CF(1) - the catalytic core - and CF(0) - the membrane proton channel. CF(1) has five subunits: alpha(3), beta(3), gamma(1), delta(1), epsilon(1). CF(0) has three main subunits: a(1), b(2) and c(9-12). The alpha and beta chains form an alternating ring which encloses part of the gamma chain. CF(1) is attached to CF(0) by a central stalk formed by the gamma and epsilon chains, while a peripheral stalk is formed by the delta and b chains.

Its subcellular location is the cell membrane. It catalyses the reaction ATP + H2O + 4 H(+)(in) = ADP + phosphate + 5 H(+)(out). Produces ATP from ADP in the presence of a proton gradient across the membrane. The alpha chain is a regulatory subunit. In Lactococcus lactis subsp. cremoris (strain MG1363), this protein is ATP synthase subunit alpha.